We begin with the raw amino-acid sequence, 417 residues long: Trafficking protein particle complex subunit 13 (417 aa).

It belongs to the TRAPPC13 family. Part of the multisubunit TRAPP (transport protein particle) complex.

This Pongo abelii (Sumatran orangutan) protein is Trafficking protein particle complex subunit 13 (TRAPPC13).